The chain runs to 185 residues: Ribosome-recycling factor (185 aa).

A disordered region spans residues 143–163 (RKDGEAGEDEVARAEKDLDKS).

The protein belongs to the RRF family.

The protein localises to the cytoplasm. Responsible for the release of ribosomes from messenger RNA at the termination of protein biosynthesis. May increase the efficiency of translation by recycling ribosomes from one round of translation to another. The protein is Ribosome-recycling factor of Mycobacterium marinum (strain ATCC BAA-535 / M).